The chain runs to 602 residues: ATP-dependent DNA helicase XPD (602 aa).

The region spanning methionine 1–leucine 247 is the Helicase ATP-binding domain. An ATP-binding site is contributed by serine 11–threonine 18. The [4Fe-4S] cluster site is built by cysteine 74, cysteine 95, cysteine 110, and cysteine 146. The DEAH box signature appears at aspartate 193–histidine 196. Residues valine 421–alanine 602 form the Helicase C-terminal domain. Positions 531 and 566 each coordinate ssDNA.

This sequence belongs to the helicase family. RAD3/XPD subfamily. In terms of assembly, monomer. It depends on [4Fe-4S] cluster as a cofactor.

It catalyses the reaction Couples ATP hydrolysis with the unwinding of duplex DNA at the replication fork by translocating in the 5'-3' direction. This creates two antiparallel DNA single strands (ssDNA). The leading ssDNA polymer is the template for DNA polymerase III holoenzyme which synthesizes a continuous strand.. The catalysed reaction is ATP + H2O = ADP + phosphate + H(+). Its function is as follows. ATP-dependent 5'-3' DNA helicase. Thought to be involved in nucleotide excision repair (NER) of DNA. This is ATP-dependent DNA helicase XPD from Thermoplasma acidophilum (strain ATCC 25905 / DSM 1728 / JCM 9062 / NBRC 15155 / AMRC-C165).